The primary structure comprises 434 residues: Eukaryotic peptide chain release factor subunit 1-1 (434 aa).

Belongs to the eukaryotic release factor 1 family. Heterodimer of two subunits, one of which binds GTP.

The protein resides in the cytoplasm. Functionally, directs the termination of nascent peptide synthesis (translation) in response to the termination codons UAA, UAG and UGA. Modulates plant growth and development. The chain is Eukaryotic peptide chain release factor subunit 1-1 from Brassica oleracea var. botrytis (Cauliflower).